The primary structure comprises 259 residues: MMQKQNMIVVNQKEIAKNIYELVLQGTLVQQMNEPGQFVHIKVAEGIAPLLRRPISICNVDQEKNEFTMLYRAEGQGTKTLATRKQGEMVDVLGPLGHGFPVEEAEAGQTALLVGGGIGVPPLYELSQRLVAKGVRVIHILGFQTKDVVFYEEKFAELGDTYVATVDGTHGTKGFVTDVIDHYGIDFDILYSCGPLAMLRALEGRYKEKKAYISLEERMGCGIGACFACVCHLQEDPSGHSYKKVCSDGPVFPIGEVVL.

Positions 2-102 (MQKQNMIVVN…LGPLGHGFPV (101 aa)) constitute an FAD-binding FR-type domain. Residues 53–56 (RPIS), 70–72 (LYR), and 77–78 (GT) contribute to the FAD site. The [2Fe-2S] cluster site is built by cysteine 221, cysteine 226, cysteine 229, and cysteine 246.

The protein belongs to the PyrK family. Heterotetramer of 2 PyrK and 2 PyrD type B subunits. Requires [2Fe-2S] cluster as cofactor. It depends on FAD as a cofactor.

It participates in pyrimidine metabolism; UMP biosynthesis via de novo pathway; orotate from (S)-dihydroorotate (NAD(+) route): step 1/1. Responsible for channeling the electrons from the oxidation of dihydroorotate from the FMN redox center in the PyrD type B subunit to the ultimate electron acceptor NAD(+). The protein is Dihydroorotate dehydrogenase B (NAD(+)), electron transfer subunit of Bacillus cereus (strain ZK / E33L).